The primary structure comprises 107 residues: Death-associated protein-like 1 (107 aa).

Residues 1–23 (MANEVQDLLSPRKGGHPPAVKAG) are disordered.

Expressed in hair follicle (at protein level).

Functionally, may play a role in the early stages of epithelial differentiation or in apoptosis. This chain is Death-associated protein-like 1 (DAPL1), found in Homo sapiens (Human).